Here is a 315-residue protein sequence, read N- to C-terminus: Zinc finger CCCH domain-containing protein 23 (315 aa).

Residues methionine 1–glutamine 21 are disordered. 2 C3H1-type zinc fingers span residues tyrosine 131 to phenylalanine 157 and arginine 165 to glutamate 189.

The sequence is that of Zinc finger CCCH domain-containing protein 23 from Arabidopsis thaliana (Mouse-ear cress).